The following is a 534-amino-acid chain: CTP synthase (534 aa).

Residues 1 to 267 (MTKYIFVTGG…DQIVCDHLKL (267 aa)) are amidoligase domain. Serine 13 provides a ligand contact to CTP. Serine 13 provides a ligand contact to UTP. 14-19 (SIGKGI) serves as a coordination point for ATP. Tyrosine 54 contacts L-glutamine. Aspartate 71 contributes to the ATP binding site. Residues aspartate 71 and glutamate 141 each contribute to the Mg(2+) site. CTP is bound by residues 148–150 (DIE), 188–193 (KTKPTQ), and lysine 224. Residues 188-193 (KTKPTQ) and lysine 224 each bind UTP. The Glutamine amidotransferase type-1 domain occupies 292-534 (KIALVGKYVE…FVTAAVENMK (243 aa)). Glycine 354 contributes to the L-glutamine binding site. Cysteine 381 functions as the Nucleophile; for glutamine hydrolysis in the catalytic mechanism. L-glutamine contacts are provided by residues 382 to 385 (LGMQ), glutamate 405, and arginine 463. Active-site residues include histidine 508 and glutamate 510.

Belongs to the CTP synthase family. Homotetramer.

The enzyme catalyses UTP + L-glutamine + ATP + H2O = CTP + L-glutamate + ADP + phosphate + 2 H(+). It carries out the reaction L-glutamine + H2O = L-glutamate + NH4(+). The catalysed reaction is UTP + NH4(+) + ATP = CTP + ADP + phosphate + 2 H(+). It functions in the pathway pyrimidine metabolism; CTP biosynthesis via de novo pathway; CTP from UDP: step 2/2. Its activity is regulated as follows. Allosterically activated by GTP, when glutamine is the substrate; GTP has no effect on the reaction when ammonia is the substrate. The allosteric effector GTP functions by stabilizing the protein conformation that binds the tetrahedral intermediate(s) formed during glutamine hydrolysis. Inhibited by the product CTP, via allosteric rather than competitive inhibition. Functionally, catalyzes the ATP-dependent amination of UTP to CTP with either L-glutamine or ammonia as the source of nitrogen. Regulates intracellular CTP levels through interactions with the four ribonucleotide triphosphates. This Streptococcus agalactiae serotype Ia (strain ATCC 27591 / A909 / CDC SS700) protein is CTP synthase.